We begin with the raw amino-acid sequence, 266 residues long: Type III pantothenate kinase (266 aa).

Position 11-18 (11-18) interacts with ATP; the sequence is DIGNTSTV. 111-114 contacts substrate; the sequence is GADR. The Proton acceptor role is filled by aspartate 113. Residue aspartate 135 participates in K(+) binding. ATP is bound at residue threonine 138. Threonine 190 provides a ligand contact to substrate.

This sequence belongs to the type III pantothenate kinase family. As to quaternary structure, homodimer. NH4(+) serves as cofactor. It depends on K(+) as a cofactor.

The protein localises to the cytoplasm. It catalyses the reaction (R)-pantothenate + ATP = (R)-4'-phosphopantothenate + ADP + H(+). The protein operates within cofactor biosynthesis; coenzyme A biosynthesis; CoA from (R)-pantothenate: step 1/5. In terms of biological role, catalyzes the phosphorylation of pantothenate (Pan), the first step in CoA biosynthesis. The protein is Type III pantothenate kinase of Deinococcus geothermalis (strain DSM 11300 / CIP 105573 / AG-3a).